A 462-amino-acid chain; its full sequence is MFSSIKDILENPILNSNVTINGWIRTKRSNGKIGFIEINDGSTLKGIQAVINEEENQFTEKDLKKLTTGASISLTGLLVESPAKGQNYEIKIYSFNVIGEADSKTYPLQKKRHTFEFLREIPHLRIRTNTFGAIARVRNKISYKIHEYFQKNGFFYINTPIITSNDGEGAGEMFRVSTLKFNKPNNSLSNIDFKDDFFGKEAFLSVTGQLHGEAYAMALSKIYTFGPTFRAENSNTTRHASEFWMIEPEMAFYKLNDNISLAEDLLKYLLSSILNECSQDMDFLENYIEKGLIKKLENVINSNFEVITYTKAIEILESSKKNFEIKPCWGIDLQTDHERYLTEEIFKKPIAVIDYPKNFKAFYMKINKDNKTVKGMDILVPRIGEIIGGSEREDDLQKLENRIKELNLNIEHLNWYLDLRRFGSTPHSGFGLGLERLVQYTTGISNIRDSIPFPRTPKNLYF.

Belongs to the class-II aminoacyl-tRNA synthetase family. Homodimer.

It is found in the cytoplasm. It catalyses the reaction tRNA(Asn) + L-asparagine + ATP = L-asparaginyl-tRNA(Asn) + AMP + diphosphate + H(+). The protein is Asparagine--tRNA ligase of Borrelia garinii subsp. bavariensis (strain ATCC BAA-2496 / DSM 23469 / PBi) (Borreliella bavariensis).